We begin with the raw amino-acid sequence, 205 residues long: GTP cyclohydrolase 1 (205 aa).

C94, H97, and C165 together coordinate Zn(2+).

The protein belongs to the GTP cyclohydrolase I family. Homomer.

It catalyses the reaction GTP + H2O = 7,8-dihydroneopterin 3'-triphosphate + formate + H(+). Its pathway is cofactor biosynthesis; 7,8-dihydroneopterin triphosphate biosynthesis; 7,8-dihydroneopterin triphosphate from GTP: step 1/1. The polypeptide is GTP cyclohydrolase 1 (Sinorhizobium fredii (strain NBRC 101917 / NGR234)).